Consider the following 154-residue polypeptide: Myoglobin (154 aa).

Residues glycine 2–lysine 148 form the Globin domain. Serine 4 bears the Phosphoserine mark. Histidine 65 is a nitrite binding site. Histidine 65 serves as a coordination point for O2. A Phosphothreonine modification is found at threonine 68. A heme b-binding site is contributed by histidine 94.

It belongs to the globin family. As to quaternary structure, monomeric.

The protein localises to the cytoplasm. Its subcellular location is the sarcoplasm. The enzyme catalyses Fe(III)-heme b-[protein] + nitric oxide + H2O = Fe(II)-heme b-[protein] + nitrite + 2 H(+). It catalyses the reaction H2O2 + AH2 = A + 2 H2O. Its function is as follows. Monomeric heme protein which primary function is to store oxygen and facilitate its diffusion within muscle tissues. Reversibly binds oxygen through a pentacoordinated heme iron and enables its timely and efficient release as needed during periods of heightened demand. Depending on the oxidative conditions of tissues and cells, and in addition to its ability to bind oxygen, it also has a nitrite reductase activity whereby it regulates the production of bioactive nitric oxide. Under stress conditions, like hypoxia and anoxia, it also protects cells against reactive oxygen species thanks to its pseudoperoxidase activity. This chain is Myoglobin (MB), found in Canis lupus familiaris (Dog).